An 823-amino-acid polypeptide reads, in one-letter code: Bifunctional enzyme flvA (823 aa).

Residues 56-535 (TAKFEMALMP…QRLYDAKFYI (480 aa)) form a pyridoxal 5'-phosphate-dependent lyase region. K331 carries the N6-(pyridoxal phosphate)lysine modification. The interval 573 to 823 (DFDALQQVSH…TLPMNVPLWL (251 aa)) is alpha-ketoglutarate-dependent oxygenase. Fe cation contacts are provided by H703 and D705.

The protein in the N-terminal section; belongs to the trans-sulfuration enzymes family. It in the C-terminal section; belongs to the iron/ascorbate-dependent oxidoreductase family. Pyridoxal 5'-phosphate serves as cofactor. The cofactor is Fe(2+).

The enzyme catalyses O-acetyl-L-homoserine + 3-methyl-2-oxobutanoate = (6S)-6-amino-3,3-dimethyl-2-oxoheptanedioate + acetate + H(+). It catalyses the reaction (6S)-3,3-dimethylpiperidine-2,6-dicarboxylate + 2-oxoglutarate + AH2 + O2 + H(+) = (2S)-5,5-dimethylpiperidine-2-carboxylate + succinate + A + 2 CO2 + H2O. The protein operates within secondary metabolite biosynthesis; terpenoid biosynthesis. Its function is as follows. Bifunctional enzyme; part of the gene cluster that mediates the biosynthesis of flavunoidine, an alkaloidal terpenoid with a tetracyclic cage-like core connected to dimethylcadaverine via a C-N bond and acylated with 5,5-dimethyl-L-pipecolate. The tetracyclic core is synthesized by the terpene cyclase flvE and the cytochrome P450 monooxygenase flvD. The terpene cyclase flvE catalyzes the cyclization of farnesyl pyrophosphate (FPP) to form (1R,4R,5S)-(+)-acoradiene and the cytochrome P450 monooxygenase flvD is then responsible for oxidative conversion of (1R,4R,5S)-(+)-acoradiene into the tetracyclic cage present in the final product flavunoidine. In parallel, the N-methyltransferase flvH dimethylates L-lysine to give N,N-dimethyl-L-Lysin which is decarboxylated by flvG to afford dimethylcadaverine. The terpene cyclase-like protein flvF is the enzyme that attaches the dimethylcadaverine precusor at the C-7 of the tetracyclic cage to yield pre-flavunoidine. The cytochrome monooxygenase flvC hydroxylates the C-10 position of pre-flavunoidine whereas the NRPS flvI acylates the terpenoid core at the hydroxylated C-10 with dimethylpipecolate to yield final flavunoidine. The bifunctional enzyme flvA and the dehydrogenase flvB are responsible for the synthesis of the dimethylpipecolate precursor. The PLP-dependent lyase domain of flvA might use L-O-acetyl-homoserine and alpha-keto-isovalerate to form an intermediary ketone that can cyclize intramolecularly to yield an imine. The imine can be reduced by flvB to yield the 6-carboxylated pipecolate. The C-terminal alpha-KG-dependent oxygenase domain of flvA is then proposed to catalyze the decarboxylation to yield dimethylpipecolate. This is Bifunctional enzyme flvA from Aspergillus flavus (strain ATCC 200026 / FGSC A1120 / IAM 13836 / NRRL 3357 / JCM 12722 / SRRC 167).